The sequence spans 595 residues: DNA ligase (595 aa).

NAD(+) is bound by residues 32 to 36, 81 to 82, and E113; these read DEKYD and SL. K115 functions as the N6-AMP-lysine intermediate in the catalytic mechanism. Residues R136, E178, K296, and K320 each contribute to the NAD(+) site. 4 residues coordinate Zn(2+): C414, C417, C432, and C438.

It belongs to the NAD-dependent DNA ligase family. LigA subfamily. Mg(2+) serves as cofactor. It depends on Mn(2+) as a cofactor.

It carries out the reaction NAD(+) + (deoxyribonucleotide)n-3'-hydroxyl + 5'-phospho-(deoxyribonucleotide)m = (deoxyribonucleotide)n+m + AMP + beta-nicotinamide D-nucleotide.. Functionally, DNA ligase that catalyzes the formation of phosphodiester linkages between 5'-phosphoryl and 3'-hydroxyl groups in double-stranded DNA using NAD as a coenzyme and as the energy source for the reaction. It is essential for DNA replication and repair of damaged DNA. The protein is DNA ligase of Blochmanniella pennsylvanica (strain BPEN).